A 331-amino-acid polypeptide reads, in one-letter code: dTDP-glucose 4,6-dehydratase (331 aa).

Residues 11–12 (FI), 33–36 (DALT), 57–58 (DI), 77–81 (FAAES), and Thr-96 each bind NAD(+). Ser-81 provides a ligand contact to substrate. Thr-120 lines the substrate pocket. Asp-121 serves as the catalytic Proton donor. Active-site proton acceptor residues include Glu-122 and Tyr-147. NAD(+) is bound at residue 147-151 (YSATK). Position 176 (Asn-176) interacts with substrate. Residue Asn-177 coordinates NAD(+). Substrate contacts are provided by residues 186–191 (KFIPRQ), 202–204 (KLY), Arg-211, Asn-246, and 269–273 (DRVGH).

The protein belongs to the NAD(P)-dependent epimerase/dehydratase family. dTDP-glucose dehydratase subfamily. Homodimer. NAD(+) is required as a cofactor.

It carries out the reaction dTDP-alpha-D-glucose = dTDP-4-dehydro-6-deoxy-alpha-D-glucose + H2O. The protein operates within carbohydrate biosynthesis; dTDP-L-rhamnose biosynthesis. Functionally, catalyzes the dehydration of dTDP-D-glucose to form dTDP-6-deoxy-D-xylo-4-hexulose via a three-step process involving oxidation, dehydration and reduction. Involved in the biosynthesis of the dTDP-L-rhamnose which is a component of the critical linker, D-N-acetylglucosamine-L-rhamnose disaccharide, which connects the galactan region of arabinogalactan to peptidoglycan via a phosphodiester linkage. In Mycobacterium tuberculosis (strain CDC 1551 / Oshkosh), this protein is dTDP-glucose 4,6-dehydratase (rmlB).